We begin with the raw amino-acid sequence, 277 residues long: Urease accessory protein UreD (277 aa).

It belongs to the UreD family. As to quaternary structure, ureD, UreF and UreG form a complex that acts as a GTP-hydrolysis-dependent molecular chaperone, activating the urease apoprotein by helping to assemble the nickel containing metallocenter of UreC. The UreE protein probably delivers the nickel.

It is found in the cytoplasm. In terms of biological role, required for maturation of urease via the functional incorporation of the urease nickel metallocenter. The polypeptide is Urease accessory protein UreD (Yersinia pestis (strain Pestoides F)).